We begin with the raw amino-acid sequence, 471 residues long: Glutamate--tRNA ligase (471 aa).

The 'HIGH' region signature appears at 9 to 19; that stretch reads PSPTGYLHVGG. The 'KMSKS' region signature appears at 237–241; it reads KLSKR. An ATP-binding site is contributed by K240.

It belongs to the class-I aminoacyl-tRNA synthetase family. Glutamate--tRNA ligase type 1 subfamily. Monomer.

Its subcellular location is the cytoplasm. It catalyses the reaction tRNA(Glu) + L-glutamate + ATP = L-glutamyl-tRNA(Glu) + AMP + diphosphate. In terms of biological role, catalyzes the attachment of glutamate to tRNA(Glu) in a two-step reaction: glutamate is first activated by ATP to form Glu-AMP and then transferred to the acceptor end of tRNA(Glu). The protein is Glutamate--tRNA ligase of Pectobacterium atrosepticum (strain SCRI 1043 / ATCC BAA-672) (Erwinia carotovora subsp. atroseptica).